Reading from the N-terminus, the 441-residue chain is Tol-Pal system protein TolB (441 aa).

An N-terminal signal peptide occupies residues 1 to 25 (MRIFFFAYVLPTVISLLLGCQGAIA).

The protein belongs to the TolB family. In terms of assembly, the Tol-Pal system is composed of five core proteins: the inner membrane proteins TolA, TolQ and TolR, the periplasmic protein TolB and the outer membrane protein Pal. They form a network linking the inner and outer membranes and the peptidoglycan layer.

It is found in the periplasm. In terms of biological role, part of the Tol-Pal system, which plays a role in outer membrane invagination during cell division and is important for maintaining outer membrane integrity. The sequence is that of Tol-Pal system protein TolB from Anaplasma marginale (strain St. Maries).